The primary structure comprises 451 residues: Protein SAR DEFICIENT 1 (451 aa).

The DNA-binding stretch occupies residues 149–270 (DKWTSDEFES…AFHKKLSSRH (122 aa)).

The protein belongs to the plant ACBP60 protein family. As to quaternary structure, (Microbial infection) Interacts with V.dahliae SCP41.

The protein localises to the nucleus. In terms of biological role, transcription activator that binds DNA in a sequence-specific manner, 5'-GAAATTTTGG-3', to promote the expression of target genes. Recruited to the promoter of ICS1 and other defense-related genes (e.g. PR1 and SID2) in response to both biotic (e.g. Pseudomonas syringae pv. maculicola ES4326) and abiotic stresses (e.g. UV-B), thus triggering slow defense responses by stimulating salicylic acid (SA) biosynthesis. Required for basal and systemic acquired resistance to P.syringae pv. maculicola and Hyaloperonospora arabidopsidis. The sequence is that of Protein SAR DEFICIENT 1 from Arabidopsis thaliana (Mouse-ear cress).